The following is a 233-amino-acid chain: Synaptogyrin-1 (233 aa).

Methionine 1 is subject to N-acetylmethionine. The Cytoplasmic segment spans residues 1-23 (MEGGAYGAGKAGGAFDPYTLVRQ). The 154-residue stretch at 20–173 (LVRQPHTILR…QAVLAFQRYQ (154 aa)) folds into the MARVEL domain. A helical membrane pass occupies residues 24–44 (PHTILRVVSWLFSIVVFGSIV). Residues 45 to 71 (NEGYLNSASEGEEFCIYNRNPNACSYG) lie on the Lumenal side of the membrane. A helical transmembrane segment spans residues 72–92 (VAVGVLAFLTCLLYLALDVYF). At 93-103 (PQISSVKDRKK) the chain is on the cytoplasmic side. The chain crosses the membrane as a helical span at residues 104 to 124 (AVLSDIGVSAFWAFLWFVGFC). Residues 125 to 148 (YLANQWQVSKPKDNPLNEGTDAAR) are Lumenal-facing. Residues 149 to 169 (AAIAFSFFSIFTWAGQAVLAF) traverse the membrane as a helical segment. The Cytoplasmic portion of the chain corresponds to 170–233 (QRYQIGADSA…EPQGYQSQGY (64 aa)). Residues 194–233 (MPYAPYVEPTGPDPAGMGGTYQQPANTFDTEPQGYQSQGY) form a disordered region. Polar residues predominate over residues 213–233 (TYQQPANTFDTEPQGYQSQGY).

It belongs to the synaptogyrin family.

It localises to the cytoplasmic vesicle. The protein localises to the secretory vesicle. It is found in the synaptic vesicle membrane. Its subcellular location is the melanosome. May play a role in regulated exocytosis. Modulates the localization of synaptophysin/SYP into synaptic-like microvesicles and may therefore play a role in synaptic-like microvesicle formation and/or maturation. Involved in the regulation of short-term and long-term synaptic plasticity. The protein is Synaptogyrin-1 of Homo sapiens (Human).